We begin with the raw amino-acid sequence, 334 residues long: tRNA U34 carboxymethyltransferase (334 aa).

Carboxy-S-adenosyl-L-methionine-binding positions include Lys-91, Trp-105, Lys-110, Gly-130, 152 to 154, 181 to 182, Met-196, Tyr-200, and Arg-315; these read DPT and IE.

This sequence belongs to the class I-like SAM-binding methyltransferase superfamily. CmoB family. As to quaternary structure, homotetramer.

The catalysed reaction is carboxy-S-adenosyl-L-methionine + 5-hydroxyuridine(34) in tRNA = 5-carboxymethoxyuridine(34) in tRNA + S-adenosyl-L-homocysteine + H(+). Its function is as follows. Catalyzes carboxymethyl transfer from carboxy-S-adenosyl-L-methionine (Cx-SAM) to 5-hydroxyuridine (ho5U) to form 5-carboxymethoxyuridine (cmo5U) at position 34 in tRNAs. In Klebsiella pneumoniae (strain 342), this protein is tRNA U34 carboxymethyltransferase.